The chain runs to 266 residues: L-aspartate dehydrogenase (266 aa).

Positions 123 and 189 each coordinate NAD(+). His219 is a catalytic residue.

Belongs to the L-aspartate dehydrogenase family.

The catalysed reaction is L-aspartate + NADP(+) + H2O = oxaloacetate + NH4(+) + NADPH + H(+). The enzyme catalyses L-aspartate + NAD(+) + H2O = oxaloacetate + NH4(+) + NADH + H(+). It functions in the pathway cofactor biosynthesis; NAD(+) biosynthesis; iminoaspartate from L-aspartate (dehydrogenase route): step 1/1. In terms of biological role, specifically catalyzes the NAD or NADP-dependent dehydrogenation of L-aspartate to iminoaspartate. The sequence is that of L-aspartate dehydrogenase from Cupriavidus necator (strain ATCC 17699 / DSM 428 / KCTC 22496 / NCIMB 10442 / H16 / Stanier 337) (Ralstonia eutropha).